Reading from the N-terminus, the 599-residue chain is Aspartate--tRNA(Asp/Asn) ligase (599 aa).

Glu174 contacts L-aspartate. Residues 198–201 (QLFK) are aspartate. Arg220 contacts L-aspartate. ATP contacts are provided by residues 220–222 (RDE) and Gln229. His457 is an L-aspartate binding site. ATP is bound at residue Glu491. An L-aspartate-binding site is contributed by Arg498. 543–546 (GLDR) contributes to the ATP binding site.

This sequence belongs to the class-II aminoacyl-tRNA synthetase family. Type 1 subfamily. As to quaternary structure, homodimer.

The protein localises to the cytoplasm. It catalyses the reaction tRNA(Asx) + L-aspartate + ATP = L-aspartyl-tRNA(Asx) + AMP + diphosphate. Its function is as follows. Aspartyl-tRNA synthetase with relaxed tRNA specificity since it is able to aspartylate not only its cognate tRNA(Asp) but also tRNA(Asn). Reaction proceeds in two steps: L-aspartate is first activated by ATP to form Asp-AMP and then transferred to the acceptor end of tRNA(Asp/Asn). This is Aspartate--tRNA(Asp/Asn) ligase from Paraburkholderia xenovorans (strain LB400).